Here is a 390-residue protein sequence, read N- to C-terminus: uncharacterized protein (390 aa).

The Glutaredoxin domain occupies 215-325; it reads SRFKRKTLGK…KLIKDCEMVE (111 aa).

This is an uncharacterized protein from Arabidopsis thaliana (Mouse-ear cress).